A 331-amino-acid chain; its full sequence is Laforin (331 aa).

Residues Met-1–Leu-124 enclose the CBM20 domain. Phosphoserine; by AMPK is present on Ser-25. Residues Trp-32, Lys-87, Gly-103 to Asp-107, Asp-197, Asp-235, and Arg-241 contribute to the substrate site. Residues His-156–Lys-323 form the Tyrosine-protein phosphatase domain. Cys-266 serves as the catalytic Phosphocysteine intermediate. The Glucan phosphatase signature motif CXAGXGR motif lies at Cys-266 to Arg-272. Residues Asn-267–Arg-272 and Tyr-304 each bind substrate.

The protein belongs to the protein-tyrosine phosphatase family. In terms of assembly, homodimer. Interacts with itself. Interacts with PPP1R3B, PPP1R3C, PPP1R3D, HIRIP5, and EPM2AIP1. Binds glycogen and Lafora bodies. Interacts with NHLRC1/malin (via the NHL repeats). Forms a complex with NHLRC1/malin and HSP70. Interacts with PPP1R3D; in the presence of NHLC1/malin the interaction leads to ubiquitination and autophagic degradation of PPP1R3D. Interacts (via the phosphatase domain) with MAPT/Tau; the interaction dephosphorylates MAPT. Interacts with PRDM8. Post-translationally, polyubiquitinated by NHLRC1/malin. In terms of processing, phosphorylation on Ser-25 by AMPK affects the phosphatase activity of the enzyme and its ability to homodimerize and interact with NHLRC1, PPP1R3C or PRKAA2.

It is found in the cytoplasm. The protein localises to the endoplasmic reticulum membrane. The protein resides in the cell membrane. It carries out the reaction O-phospho-L-tyrosyl-[protein] + H2O = L-tyrosyl-[protein] + phosphate. The enzyme catalyses O-phospho-L-seryl-[protein] + H2O = L-seryl-[protein] + phosphate. The catalysed reaction is O-phospho-L-threonyl-[protein] + H2O = L-threonyl-[protein] + phosphate. Plays an important role in preventing glycogen hyperphosphorylation and the formation of insoluble aggregates, via its activity as glycogen phosphatase, and by promoting the ubiquitination of proteins involved in glycogen metabolism via its interaction with the E3 ubiquitin ligase NHLRC1/malin. Dephosphorylates phosphotyrosine and synthetic substrates, such as para-nitrophenylphosphate (pNPP), and has low activity with phosphoserine and phosphothreonine substrates (in vitro). Has also been shown to dephosphorylate MAPT. Shows strong phosphatase activity towards complex carbohydrates in vitro, avoiding glycogen hyperphosphorylation which is associated with reduced branching and formation of insoluble aggregates. Forms a complex with NHLRC1/malin and HSP70, which suppresses the cellular toxicity of misfolded proteins by promoting their degradation through the ubiquitin-proteasome system (UPS). Acts as a scaffold protein to facilitate PPP1R3C/PTG ubiquitination by NHLRC1/malin. Also promotes proteasome-independent protein degradation through the macroautophagy pathway. This is Laforin (EPM2A) from Canis lupus familiaris (Dog).